The primary structure comprises 261 residues: MAHQAHAYHMVDPSPWPLTGAIAALLLTSGTAVWFHFHSLTLLTMGNILLLLTMYQWWRDIIREGTFQGHHTPPVQKGLRYGMILFITSEVFFFLGFFWAFYHSSLSPTPELGGCWPPTGIITLDPFEVPLLNTAVLLASGVTVTWAHHSIMEGERKQTIQALTLTILLGFYFTFLQGMEYYEAPFTIADGVYGSTFFVATGFHGLHVIIGSTFLAICLLRQIQYHFTSEHHFGFEAAAWYWHFVDVVWLFLYVSIYWWGS.

Residues 1 to 15 (MAHQAHAYHMVDPSP) are Mitochondrial matrix-facing. The chain crosses the membrane as a helical span at residues 16 to 34 (WPLTGAIAALLLTSGTAVW). Over 35–40 (FHFHSL) the chain is Mitochondrial intermembrane. A helical transmembrane segment spans residues 41-66 (TLLTMGNILLLLTMYQWWRDIIREGT). The Mitochondrial matrix portion of the chain corresponds to 67–72 (FQGHHT). A helical membrane pass occupies residues 73 to 105 (PPVQKGLRYGMILFITSEVFFFLGFFWAFYHSS). Over 106–128 (LSPTPELGGCWPPTGIITLDPFE) the chain is Mitochondrial intermembrane. A helical membrane pass occupies residues 129–152 (VPLLNTAVLLASGVTVTWAHHSIM). Topologically, residues 153-155 (EGE) are mitochondrial matrix. Residues 156 to 183 (RKQTIQALTLTILLGFYFTFLQGMEYYE) form a helical membrane-spanning segment. The Mitochondrial intermembrane portion of the chain corresponds to 184–190 (APFTIAD). A helical transmembrane segment spans residues 191–223 (GVYGSTFFVATGFHGLHVIIGSTFLAICLLRQI). At 224–232 (QYHFTSEHH) the chain is on the mitochondrial matrix side. The chain crosses the membrane as a helical span at residues 233-256 (FGFEAAAWYWHFVDVVWLFLYVSI). Residues 257–261 (YWWGS) lie on the Mitochondrial intermembrane side of the membrane.

Belongs to the cytochrome c oxidase subunit 3 family. As to quaternary structure, component of the cytochrome c oxidase (complex IV, CIV), a multisubunit enzyme composed of 14 subunits. The complex is composed of a catalytic core of 3 subunits MT-CO1, MT-CO2 and MT-CO3, encoded in the mitochondrial DNA, and 11 supernumerary subunits COX4I, COX5A, COX5B, COX6A, COX6B, COX6C, COX7A, COX7B, COX7C, COX8 and NDUFA4, which are encoded in the nuclear genome. The complex exists as a monomer or a dimer and forms supercomplexes (SCs) in the inner mitochondrial membrane with NADH-ubiquinone oxidoreductase (complex I, CI) and ubiquinol-cytochrome c oxidoreductase (cytochrome b-c1 complex, complex III, CIII), resulting in different assemblies (supercomplex SCI(1)III(2)IV(1) and megacomplex MCI(2)III(2)IV(2)).

The protein resides in the mitochondrion inner membrane. It catalyses the reaction 4 Fe(II)-[cytochrome c] + O2 + 8 H(+)(in) = 4 Fe(III)-[cytochrome c] + 2 H2O + 4 H(+)(out). Component of the cytochrome c oxidase, the last enzyme in the mitochondrial electron transport chain which drives oxidative phosphorylation. The respiratory chain contains 3 multisubunit complexes succinate dehydrogenase (complex II, CII), ubiquinol-cytochrome c oxidoreductase (cytochrome b-c1 complex, complex III, CIII) and cytochrome c oxidase (complex IV, CIV), that cooperate to transfer electrons derived from NADH and succinate to molecular oxygen, creating an electrochemical gradient over the inner membrane that drives transmembrane transport and the ATP synthase. Cytochrome c oxidase is the component of the respiratory chain that catalyzes the reduction of oxygen to water. Electrons originating from reduced cytochrome c in the intermembrane space (IMS) are transferred via the dinuclear copper A center (CU(A)) of subunit 2 and heme A of subunit 1 to the active site in subunit 1, a binuclear center (BNC) formed by heme A3 and copper B (CU(B)). The BNC reduces molecular oxygen to 2 water molecules using 4 electrons from cytochrome c in the IMS and 4 protons from the mitochondrial matrix. This Salmo salar (Atlantic salmon) protein is Cytochrome c oxidase subunit 3 (mt-co3).